Here is a 355-residue protein sequence, read N- to C-terminus: IgG receptor FcRn large subunit p51 (355 aa).

Residues 1–24 (MRVPRSQPWGLALLLLLLPGTLRA) form the signal peptide. Residues 25–111 (AESHRSLLYH…ALKVFGDRDS (87 aa)) are alpha-1. The Extracellular portion of the chain corresponds to 25-300 (AESHRSLLYH…LESPAKSSVP (276 aa)). Residues 112–201 (YTLQGLLGCE…ERGRGNLEWK (90 aa)) form an alpha-2 region. Asn126 carries an N-linked (GlcNAc...) asparagine glycan. An alpha-3 region spans residues 202–291 (EPPSMRLKAR…GPAQPLTVEL (90 aa)). The region spanning 203–292 (PPSMRLKARP…PAQPLTVELE (90 aa)) is the Ig-like C1-type domain. A disulfide bridge connects residues Cys222 and Cys276. A connecting peptide region spans residues 293-298 (SPAKSS). The chain crosses the membrane as a helical span at residues 301-321 (VIGISIGFLLLMTVAAGGALL). The Cytoplasmic portion of the chain corresponds to 322-355 (WRRRKGLPAPWIAFRGDDIGALLPTPGLSKDAES).

The protein belongs to the immunoglobulin superfamily. As to quaternary structure, fcRn complex consists of two subunits: p51, and p14 which is equivalent to beta-2-microglobulin. It forms an MHC class I-like heterodimer. Interacts with albumin/ALB; this interaction regulates ALB homeostasis. As to expression, expressed in liver and mammary gland of non-lactating animals. Expressed in hepatocytes and in epithelial cells of portal bile ductuli. Not expressed in the brances of portal veins or hepatic arteries. Expressed in the epithelial cells of the acini and ducti in the mammary gland with expression emphasized at the apical side. Not expressed in blood vessels of mammary gland.

Its subcellular location is the cell membrane. It is found in the endosome membrane. Cell surface receptor that transfers passive humoral immunity from the mother to the newborn. Binds to the Fc region of monomeric immunoglobulin gamma and mediates its selective uptake from milk. IgG in the milk is bound at the apical surface of the intestinal epithelium. The resultant FcRn-IgG complexes are transcytosed across the intestinal epithelium and IgG is released from FcRn into blood or tissue fluids. Throughout life, contributes to effective humoral immunity by recycling IgG and extending its half-life in the circulation. Mechanistically, monomeric IgG binding to FcRn in acidic endosomes of endothelial and hematopoietic cells recycles IgG to the cell surface where it is released into the circulation. In addition of IgG, regulates homeostasis of the other most abundant circulating protein albumin/ALB. The protein is IgG receptor FcRn large subunit p51 of Camelus dromedarius (Dromedary).